We begin with the raw amino-acid sequence, 388 residues long: Chaperone protein DnaJ (388 aa).

Residues 6–71 (DYYEILGVPR…EKRKLYDQFG (66 aa)) form the J domain. Residues 147–229 (GCEKEIPIYR…CGGTGNVRRQ (83 aa)) form a CR-type zinc finger. The Zn(2+) site is built by cysteine 160, cysteine 163, cysteine 177, cysteine 180, cysteine 203, cysteine 206, cysteine 217, and cysteine 220. CXXCXGXG motif repeat units lie at residues 160–167 (CSVCGGSG), 177–184 (CQKCGGTG), 203–210 (CDACGGTG), and 217–224 (CRECGGTG).

It belongs to the DnaJ family. Homodimer. It depends on Zn(2+) as a cofactor.

It localises to the cytoplasm. Participates actively in the response to hyperosmotic and heat shock by preventing the aggregation of stress-denatured proteins and by disaggregating proteins, also in an autonomous, DnaK-independent fashion. Unfolded proteins bind initially to DnaJ; upon interaction with the DnaJ-bound protein, DnaK hydrolyzes its bound ATP, resulting in the formation of a stable complex. GrpE releases ADP from DnaK; ATP binding to DnaK triggers the release of the substrate protein, thus completing the reaction cycle. Several rounds of ATP-dependent interactions between DnaJ, DnaK and GrpE are required for fully efficient folding. Also involved, together with DnaK and GrpE, in the DNA replication of plasmids through activation of initiation proteins. The protein is Chaperone protein DnaJ of Caldicellulosiruptor bescii (strain ATCC BAA-1888 / DSM 6725 / KCTC 15123 / Z-1320) (Anaerocellum thermophilum).